A 290-amino-acid polypeptide reads, in one-letter code: HTH-type transcriptional regulator BsdA (290 aa).

The HTH lysR-type domain maps to 1–59; sequence MDIRQLRYFITIAQEQKITSAAKKLHMAQPPLSRQLKQLEDELGVVLFDRNKKKQMTLT. A DNA-binding region (H-T-H motif) is located at residues 18–37; that stretch reads ITSAAKKLHMAQPPLSRQLK.

Belongs to the LysR transcriptional regulatory family.

In terms of biological role, could be a positive regulator of bsdBCD expression in response to salicylic acid. This is HTH-type transcriptional regulator BsdA (bsdA) from Bacillus subtilis (strain 168).